Reading from the N-terminus, the 172-residue chain is Thioredoxin M-type, chloroplastic (172 aa).

Residues 1–60 (MALESLFKSIHTKTSLSSSIVFIFKGKACLLTSKSRIQESFAELNSFTSLVLLIENHVLL) constitute a chloroplast transit peptide. One can recognise a Thioredoxin domain in the interval 61–172 (HAREAVNEVQ…TLSEKVEKYI (112 aa)). Residues Cys-97 and Cys-100 each act as nucleophile in the active site. Cys-97 and Cys-100 form a disulfide bridge.

This sequence belongs to the thioredoxin family. Plant M-type subfamily. As to quaternary structure, forms a complex with heterodimeric ferredoxin-thioredoxin reductase (FTR) and ferredoxin.

It localises to the plastid. The protein resides in the chloroplast. Its function is as follows. Participates in various redox reactions through the reversible oxidation of the active center dithiol to a disulfide. The M form is known to activate NADP-malate dehydrogenase. This chain is Thioredoxin M-type, chloroplastic, found in Pisum sativum (Garden pea).